We begin with the raw amino-acid sequence, 687 residues long: Chloride channel protein ClC-Ka (687 aa).

Helical transmembrane passes span 52–72 (FLVALGVLMALISYAMNFAIG), 94–114 (LSWTVYPVALLSFSSGFSQSI), 161–181 (IFLGKVGPFVHLSVMISAYLG), 204–224 (AAAVGVATVFAAPFSGVLFSI), and 236–256 (YWRGFFAATCGAFMFRLLGVF). Ca(2+) contacts are provided by glutamate 259, glutamate 261, aspartate 278, and glutamate 281. The next 6 membrane-spanning stretches (helical) occupy residues 282–302 (IFFFVALGFICGVLSCAYLFC), 325–345 (PSYAALVALVLASITYPPGVG), 396–416 (FTIFGTLAFFLVMKFWMLILA), 417–437 (TTIPMPAGYFMPIFIIGAAIG), 458–478 (VNPIMPGGYALAGAAAFSGAV), and 486–506 (LLAFELTGQIVHALPVLMAVL). Residues 507 to 687 (AANAISQNCQ…STLINPPAPK (181 aa)) lie on the Cytoplasmic side of the membrane. CBS domains lie at 551–609 (MNCN…QPAS) and 626–687 (CPTQ…PAPK).

Belongs to the chloride channel (TC 2.A.49) family. CLCNKA subfamily. Homodimer. Interacts with BSND. Expressed predominantly in the kidney. Expressed strongly in the cortical thick ascending limb and the distal convoluted tubule, with minor expression in the S3 segment of the proximal tubule and the cortical collecting tubule.

The protein localises to the basolateral cell membrane. It carries out the reaction chloride(in) = chloride(out). The enzyme catalyses bromide(in) = bromide(out). It catalyses the reaction nitrate(in) = nitrate(out). The catalysed reaction is iodide(out) = iodide(in). With respect to regulation, activated by extracellular Ca(2+) and inhibited by extracellular acidic pH. In terms of biological role, anion-selective channel permeable to small monovalent anions with ion selectivity for chloride &gt; bromide &gt; nitrate &gt; iodide. Forms a homodimeric channel where each subunit has its own ion conduction pathway. Conducts double-barreled currents controlled by two types of gates, two fast gates that control each subunit independently and a slow common gate that opens and shuts off both subunits simultaneously. Assembles with the regulatory subunit BSND/Barttin for sorting at the basolateral plasma membrane domain. CLCNKA:BSND channels are activated upon membrane hyperpolarization mostly controlled by fast gating. Mediates transepithelial chloride transport from the lumen to interstitial compartment along the thin ascending limb of Henle's loop, contributing to generation of hypertonic medullary interstitium as a countercurrent system to achieve urine concentration. Conducts chloride currents in the stria vascularis of the inner ear to establish the endocochlear potential necessary for normal hearing. The protein is Chloride channel protein ClC-Ka of Rattus norvegicus (Rat).